An 875-amino-acid chain; its full sequence is Neurotrypsin (875 aa).

The N-terminal stretch at 1–20 is a signal peptide; sequence MTLARFVLALVLGALPEVVG. Asn-26 is a glycosylation site (N-linked (GlcNAc...) asparagine). The segment at 30-87 is disordered; sequence HHRHRHSPPPGPQYPYYLPTHQRPPRTRPPPPLPRFPRPPRALPAQRPHALQAGHTPR. The span at 56-71 shows a compositional bias: pro residues; it reads TRPPPPLPRFPRPPRA. One can recognise a Kringle domain in the interval 93-165; that stretch reads CPAGELWVSV…GKVDWGYCDC (73 aa). 20 disulfide bridges follow: Cys-93-Cys-165, Cys-109-Cys-149, Cys-138-Cys-163, Cys-195-Cys-259, Cys-208-Cys-269, Cys-239-Cys-249, Cys-305-Cys-369, Cys-318-Cys-379, Cys-349-Cys-359, Cys-412-Cys-475, Cys-425-Cys-485, Cys-455-Cys-465, Cys-525-Cys-589, Cys-538-Cys-599, Cys-569-Cys-579, Cys-619-Cys-750, Cys-661-Cys-677, Cys-765-Cys-831, Cys-794-Cys-808, and Cys-821-Cys-850. SRCR domains lie at 170 to 271, 280 to 381, 387 to 487, and 500 to 601; these read VRLR…TCSF, IRLV…SCTP, IRLA…ACYP, and VRLM…ICDY. Positions 619 to 630 are zymogen activation region; sequence CGLRLLHRRQKR. Residues 631–874 enclose the Peptidase S1 domain; sequence IIGGKNSLRG…FVPWIKSVTK (244 aa). His-676 functions as the Charge relay system in the catalytic mechanism. Residue Asn-683 is glycosylated (N-linked (GlcNAc...) asparagine). The Charge relay system role is filled by Asp-726. Ser-825 functions as the Charge relay system in the catalytic mechanism.

Belongs to the peptidase S1 family.

It is found in the secreted. In terms of biological role, plays a role in neuronal plasticity and the proteolytic action may subserve structural reorganizations associated with learning and memory operations. This chain is Neurotrypsin (PRSS12), found in Macaca mulatta (Rhesus macaque).